Here is a 140-residue protein sequence, read N- to C-terminus: MFARLCPVSETFGRLCPVSETFARLCPVSETFARLCPVSETFARLCPVSETFGRLCPVSEMFGRLSPVSETFGRLCPVSETFGRLCPVSEMFARLCPVSETFGRLSPVSEMFGRLCPVSEMFGRLCPVSEMFGRLCPVIT.

A run of 14 repeats spans residues 1-10, 11-20, 21-30, 31-40, 41-50, 51-60, 61-70, 71-80, 81-90, 91-100, 101-110, 111-120, 121-130, and 131-140. The 14 X 10 AA tandem repeats of [MT]-F-[AG]-R-L-[CS]-P-V-[SI]-[ET] stretch occupies residues 1–140; the sequence is MFARLCPVSE…MFGRLCPVIT (140 aa).

This is an uncharacterized protein from Homo sapiens (Human).